A 340-amino-acid chain; its full sequence is Protein B17 (340 aa).

It belongs to the orthopoxvirus B17 protein family.

The polypeptide is Protein B17 (Vaccinia virus (strain Copenhagen) (VACV)).